A 189-amino-acid chain; its full sequence is Phosphoheptose isomerase (189 aa).

The region spanning 33–189 (CTDTLKAGNK…ELVEREIYGG (157 aa)) is the SIS domain. 48 to 50 (NGG) serves as a coordination point for substrate. Zn(2+) contacts are provided by His57 and Glu61. Residues Glu61, 90 to 91 (ND), 116 to 118 (STS), Ser121, and Gln168 contribute to the substrate site. Residues Gln168 and His176 each coordinate Zn(2+).

It belongs to the SIS family. GmhA subfamily. Zn(2+) is required as a cofactor.

It is found in the cytoplasm. The catalysed reaction is 2 D-sedoheptulose 7-phosphate = D-glycero-alpha-D-manno-heptose 7-phosphate + D-glycero-beta-D-manno-heptose 7-phosphate. It functions in the pathway carbohydrate biosynthesis; D-glycero-D-manno-heptose 7-phosphate biosynthesis; D-glycero-alpha-D-manno-heptose 7-phosphate and D-glycero-beta-D-manno-heptose 7-phosphate from sedoheptulose 7-phosphate: step 1/1. Its function is as follows. Catalyzes the isomerization of sedoheptulose 7-phosphate in D-glycero-D-manno-heptose 7-phosphate. This is Phosphoheptose isomerase from Akkermansia muciniphila (strain ATCC BAA-835 / DSM 22959 / JCM 33894 / BCRC 81048 / CCUG 64013 / CIP 107961 / Muc).